The sequence spans 359 residues: Peptide chain release factor 1 (359 aa).

An N5-methylglutamine modification is found at glutamine 236.

Belongs to the prokaryotic/mitochondrial release factor family. In terms of processing, methylated by PrmC. Methylation increases the termination efficiency of RF1.

Its subcellular location is the cytoplasm. Its function is as follows. Peptide chain release factor 1 directs the termination of translation in response to the peptide chain termination codons UAG and UAA. The polypeptide is Peptide chain release factor 1 (Streptococcus agalactiae).